Reading from the N-terminus, the 378-residue chain is Probable methyltransferase At1g29790 (378 aa).

At 1–6 the chain is on the cytoplasmic side; sequence MAGFTM. Residues 7–29 form a helical; Signal-anchor for type II membrane protein membrane-spanning segment; sequence SLNLLLLVAMVATNILSLYHLSS. Residues 30 to 378 are Lumenal-facing; the sequence is TTNFFQSTVK…TALLQKPVAR (349 aa). Residues 67–87 form a disordered region; sequence TTHQPDKSTSTSTSRAAVSSS. The span at 74–87 shows a compositional bias: low complexity; it reads STSTSTSRAAVSSS. A glycan (N-linked (GlcNAc...) asparagine) is linked at Asn247.

This sequence belongs to the methyltransferase superfamily.

It is found in the golgi apparatus membrane. The sequence is that of Probable methyltransferase At1g29790 from Arabidopsis thaliana (Mouse-ear cress).